Reading from the N-terminus, the 159-residue chain is Ribosomal RNA large subunit methyltransferase H (159 aa).

Residues G108 and 127 to 132 contribute to the S-adenosyl-L-methionine site; that span reads FGKLTM.

Belongs to the RNA methyltransferase RlmH family. As to quaternary structure, homodimer.

The protein localises to the cytoplasm. It carries out the reaction pseudouridine(1915) in 23S rRNA + S-adenosyl-L-methionine = N(3)-methylpseudouridine(1915) in 23S rRNA + S-adenosyl-L-homocysteine + H(+). In terms of biological role, specifically methylates the pseudouridine at position 1915 (m3Psi1915) in 23S rRNA. The sequence is that of Ribosomal RNA large subunit methyltransferase H from Lactobacillus acidophilus (strain ATCC 700396 / NCK56 / N2 / NCFM).